We begin with the raw amino-acid sequence, 512 residues long: Maturase K (512 aa).

It belongs to the intron maturase 2 family. MatK subfamily.

It is found in the plastid. The protein resides in the chloroplast. In terms of biological role, usually encoded in the trnK tRNA gene intron. Probably assists in splicing its own and other chloroplast group II introns. This Lilium longiflorum (Trumpet lily) protein is Maturase K.